We begin with the raw amino-acid sequence, 34 residues long: Cycloamanide E proprotein (34 aa).

Residues 1–10 (MSDINAARLP) constitute a propeptide that is removed on maturation. Positions 11 to 17 (SFFFPVP) form a cross-link, cyclopeptide (Ser-Pro). The propeptide occupies 18 to 34 (CISDDIEMVLTRGESLC).

It belongs to the MSDIN fungal toxin family. Post-translationally, processed by the macrocyclase-peptidase enzyme POPB to yield a cyclic decapeptide. POPB first removes 10 residues from the N-terminus. Conformational trapping of the remaining peptide forces the enzyme to release this intermediate rather than proceed to macrocyclization. The enzyme rebinds the remaining peptide in a different conformation and catalyzes macrocyclization of the N-terminal 7 residues.

Its function is as follows. Cyclic heptapeptide that belongs to the MSDIN-like toxin family responsible for a large number of food poisoning cases and deaths. Cycloaminide E is structurally related to other cycloamanides that are non-toxic to mammals but show immunosuppressive activity. This Amanita phalloides (Death cap) protein is Cycloamanide E proprotein.